The following is a 220-amino-acid chain: Ras-related protein Rab-11B (220 aa).

G18–S25 serves as a coordination point for GTP. The Effector region signature appears at K40 to F48. GTP-binding positions include D66–Q70 and N124–D127. 2 S-geranylgeranyl cysteine lipidation sites follow: C219 and C220.

The protein belongs to the small GTPase superfamily. Rab family.

It is found in the cell membrane. The polypeptide is Ras-related protein Rab-11B (rab11B) (Dictyostelium discoideum (Social amoeba)).